The following is a 460-amino-acid chain: Probable argininosuccinate lyase (460 aa).

Residues Ser26, Asn114, and Thr159 each coordinate 2-(N(omega)-L-arginino)succinate. Residue His160 is the Proton acceptor of the active site. The Proton donor role is filled by Ser281. Positions 289, 321, 326, and 329 each coordinate 2-(N(omega)-L-arginino)succinate.

Belongs to the lyase 1 family. Argininosuccinate lyase subfamily. In terms of assembly, homotetramer.

It carries out the reaction 2-(N(omega)-L-arginino)succinate = fumarate + L-arginine. It participates in amino-acid biosynthesis; L-arginine biosynthesis; L-arginine from L-ornithine and carbamoyl phosphate: step 3/3. The sequence is that of Probable argininosuccinate lyase (argx) from Schizosaccharomyces pombe (strain 972 / ATCC 24843) (Fission yeast).